The sequence spans 233 residues: Probable translation initiation factor, mitochondrial (233 aa).

A mitochondrion-targeting transit peptide spans 1–39 (MNSYLQFPHRKLFIQFSYSLTSVFRKCQSRTFMNSQFAS).

It belongs to the IF-3 family.

Its subcellular location is the mitochondrion. Its function is as follows. May be involved in mitochondrial translation initiation. This Schizosaccharomyces pombe (strain 972 / ATCC 24843) (Fission yeast) protein is Probable translation initiation factor, mitochondrial.